We begin with the raw amino-acid sequence, 211 residues long: Thymidylate kinase (211 aa).

An ATP-binding site is contributed by 10 to 17 (GPDGAGKT).

This sequence belongs to the thymidylate kinase family.

It carries out the reaction dTMP + ATP = dTDP + ADP. Its function is as follows. Phosphorylation of dTMP to form dTDP in both de novo and salvage pathways of dTTP synthesis. The sequence is that of Thymidylate kinase from Lactococcus lactis subsp. cremoris (strain MG1363).